An 80-amino-acid chain; its full sequence is UPF0180 protein GK1051 (80 aa).

The protein belongs to the UPF0180 family.

The protein is UPF0180 protein GK1051 of Geobacillus kaustophilus (strain HTA426).